The following is a 160-amino-acid chain: Large ribosomal subunit protein uL30m (160 aa).

A mitochondrion-targeting transit peptide spans 1-34 (MAGVLRSVFQRPPGRLQTVKKGAESLIGTEWIRH). Residues 45–64 (VFQPRPEDHEKYGGDPQNPH) form a disordered region.

The protein belongs to the universal ribosomal protein uL30 family. Component of the mitochondrial ribosome large subunit (39S) which comprises a 16S rRNA and about 50 distinct proteins.

Its subcellular location is the mitochondrion. The polypeptide is Large ribosomal subunit protein uL30m (Mrpl30) (Rattus norvegicus (Rat)).